The sequence spans 341 residues: TERF1-interacting nuclear factor 2 (341 aa).

Position 2 is an N-acetylalanine (A2). Residues 243 to 265 carry the TBM motif; sequence HRFNLAPLGKRKSRSHWTSAKAC. The Nuclear localization signal motif lies at 249–255; the sequence is PLGKRKS. Residues 283 to 341 are disordered; the sequence is PAQDLSNPKSREEPGAASAASVGTEPVCTEEAKTPSRPLGKRALEETPPDSPAASRRTV.

In terms of assembly, monomer. Found in a complex with POT1; TERF1 and TNKS1. Component of the shelterin complex (telosome) composed of TERF1, TERF2, TINF2, TERF2IP, ACD and POT1. Interacts with TERF1.

It localises to the nucleus. The protein localises to the chromosome. It is found in the telomere. Component of the shelterin complex (telosome) that is involved in the regulation of telomere length and protection. Shelterin associates with arrays of double-stranded TTAGGG repeats added by telomerase and protects chromosome ends; without its protective activity, telomeres are no longer hidden from the DNA damage surveillance and chromosome ends are inappropriately processed by DNA repair pathways. Plays a role in shelterin complex assembly. The chain is TERF1-interacting nuclear factor 2 (Tinf2) from Mus musculus (Mouse).